The following is a 309-amino-acid chain: Ribonuclease Z (309 aa).

Residues H63, H65, D67, H68, H141, D212, and H270 each coordinate Zn(2+). D67 (proton acceptor) is an active-site residue.

This sequence belongs to the RNase Z family. As to quaternary structure, homodimer. Zn(2+) is required as a cofactor.

The catalysed reaction is Endonucleolytic cleavage of RNA, removing extra 3' nucleotides from tRNA precursor, generating 3' termini of tRNAs. A 3'-hydroxy group is left at the tRNA terminus and a 5'-phosphoryl group is left at the trailer molecule.. In terms of biological role, zinc phosphodiesterase, which displays some tRNA 3'-processing endonuclease activity. Probably involved in tRNA maturation, by removing a 3'-trailer from precursor tRNA. The sequence is that of Ribonuclease Z from Halalkalibacterium halodurans (strain ATCC BAA-125 / DSM 18197 / FERM 7344 / JCM 9153 / C-125) (Bacillus halodurans).